The primary structure comprises 174 residues: U1 small nuclear ribonucleoprotein C (174 aa).

The Matrin-type zinc finger occupies Tyr-4–Leu-36. Composition is skewed to low complexity over residues Gln-82–Met-109 and Pro-122–Pro-140. Residues Gln-82 to Leu-174 form a disordered region. Over residues His-141 to Gln-163 the composition is skewed to basic residues. The span at Gln-164 to Leu-174 shows a compositional bias: low complexity.

It belongs to the U1 small nuclear ribonucleoprotein C family. Component of the U1 snRNP. The U1 snRNP is composed of the U1 snRNA and the 7 core Sm proteins SNRPB, SNRPD1, SNRPD2, SNRPD3, SNRPE, SNRPF and SNRPG that assemble in a heptameric protein ring on the Sm site of the small nuclear RNA to form the core snRNP, and at least 3 U1 snRNP-specific proteins SNRNP70/U1-70K, SNRPA/U1-A and SNRPC/U1-C. SNRPC/U1-C interacts with U1 snRNA and the 5' splice-site region of the pre-mRNA.

The protein localises to the nucleus. Its function is as follows. Component of the spliceosomal U1 snRNP, which is essential for recognition of the pre-mRNA 5' splice-site and the subsequent assembly of the spliceosome. SNRPC/U1-C is directly involved in initial 5' splice-site recognition for both constitutive and regulated alternative splicing. The interaction with the 5' splice-site seems to precede base-pairing between the pre-mRNA and the U1 snRNA. Stimulates commitment or early (E) complex formation by stabilizing the base pairing of the 5' end of the U1 snRNA and the 5' splice-site region. The polypeptide is U1 small nuclear ribonucleoprotein C (Dictyostelium discoideum (Social amoeba)).